The chain runs to 1545 residues: Tricalbin-3 (1545 aa).

The tract at residues 1–89 (MTGIKAQVHP…SNPEGKKQSS (89 aa)) is disordered. Over 1-206 (MTGIKAQVHP…AYILENFYND (206 aa)) the chain is Cytoplasmic. Positions 62-80 (TKTSNSVSDVSKGQKTADS) are enriched in polar residues. 2 positions are modified to phosphoserine: Ser-67 and Ser-112. Residues 207-227 (WYCNIATVLGTCFFSWLFAYI) form a helical membrane-spanning segment. A topological domain (extracellular) is located at residue Gly-228. The helical transmembrane segment at 229–249 (FSWWSMIFIFLGTATVYNAEY) threads the bilayer. The Cytoplasmic portion of the chain corresponds to 250 to 1545 (TRFNRNIRDD…VPEVPQEYTQ (1296 aa)). One can recognise an SMP-LTD domain in the interval 272-479 (RVESTTWLNS…PPNHLDINVE (208 aa)). The 127-residue stretch at 470–596 (PPNHLDINVE…LQNPVLDNQT (127 aa)) folds into the C2 1 domain. Residues 620–660 (EDKSEEKAVERAEAKAKGKKEDENEDTTEKEEDENEESSQT) are a coiled coil. Over residues 624-641 (EEKAVERAEAKAKGKKED) the composition is skewed to basic and acidic residues. The disordered stretch occupies residues 624-660 (EEKAVERAEAKAKGKKEDENEDTTEKEEDENEESSQT). Residues 642-658 (ENEDTTEKEEDENEESS) are compositionally biased toward acidic residues. C2 domains are found at residues 646–763 (TTEK…AQEF) and 783–897 (MTGA…SGKY). Residues 937-972 (SPEELVNVEKLEKELKEKKKKFEATQEENEQEMEKN) adopt a coiled-coil conformation. In terms of domain architecture, C2 4 spans 1119–1234 (PTSVKLPSSE…EVGKTYNWNL (116 aa)). Ca(2+)-binding residues include Asp-1150, Asp-1156, Asp-1204, Asp-1206, and Asp-1212. A disordered region spans residues 1304–1404 (LLKSLGGNPM…NSRGHSRASS (101 aa)). Polar residues predominate over residues 1318-1328 (SSNGNESNGAK). The segment covering 1329–1340 (KSSEKKSFDRRS) has biased composition (basic and acidic residues). Phosphoserine is present on residues Ser-1340, Ser-1342, and Ser-1346. Positions 1341–1351 (PSNLNSTSVTP) are enriched in polar residues. The residue at position 1350 (Thr-1350) is a Phosphothreonine. Phosphoserine is present on Ser-1354. Polar residues predominate over residues 1361 to 1373 (VPNTSYAPVQSAS). Positions 1377–1404 (KPTDNTSSSSNKKDTPSSNSRGHSRASS) are enriched in low complexity. The C2 5 domain occupies 1396–1514 (SRGHSRASSF…QQDGQISVKL (119 aa)). Residue Ser-1400 is modified to Phosphoserine.

Belongs to the tricalbin family. In terms of assembly, interacts with TCB2 via its C-terminal domain. Ca(2+) serves as cofactor.

Its subcellular location is the cell membrane. It is found in the endoplasmic reticulum membrane. May play a role in membrane trafficking. In Saccharomyces cerevisiae (strain ATCC 204508 / S288c) (Baker's yeast), this protein is Tricalbin-3 (TCB3).